A 300-amino-acid polypeptide reads, in one-letter code: Small ribosomal subunit biogenesis GTPase RsgA (300 aa).

Residues 69–231 (RSDEMRVKQF…LIDSPGFQAF (163 aa)) enclose the CP-type G domain. Residues 119 to 122 (NKID) and 172 to 180 (GQSGMGKST) contribute to the GTP site. Residues Cys-255, Cys-260, His-262, and Cys-268 each contribute to the Zn(2+) site.

Belongs to the TRAFAC class YlqF/YawG GTPase family. RsgA subfamily. As to quaternary structure, monomer. Associates with 30S ribosomal subunit, binds 16S rRNA. The cofactor is Zn(2+).

The protein localises to the cytoplasm. One of several proteins that assist in the late maturation steps of the functional core of the 30S ribosomal subunit. Helps release RbfA from mature subunits. May play a role in the assembly of ribosomal proteins into the subunit. Circularly permuted GTPase that catalyzes slow GTP hydrolysis, GTPase activity is stimulated by the 30S ribosomal subunit. The chain is Small ribosomal subunit biogenesis GTPase RsgA from Bordetella bronchiseptica (strain ATCC BAA-588 / NCTC 13252 / RB50) (Alcaligenes bronchisepticus).